Reading from the N-terminus, the 116-residue chain is NADH-ubiquinone oxidoreductase chain 3 (116 aa).

The next 3 helical transmembrane spans lie at 6 to 26 (FMLLLSLTLSIILTTINFWLA), 56 to 76 (FFLVAILFLLFDLEIALLLPL), and 85 to 105 (PLLTLLWTSILLLLLTLGLVY).

This sequence belongs to the complex I subunit 3 family.

It is found in the mitochondrion membrane. The enzyme catalyses a ubiquinone + NADH + 5 H(+)(in) = a ubiquinol + NAD(+) + 4 H(+)(out). Core subunit of the mitochondrial membrane respiratory chain NADH dehydrogenase (Complex I) that is believed to belong to the minimal assembly required for catalysis. Complex I functions in the transfer of electrons from NADH to the respiratory chain. The immediate electron acceptor for the enzyme is believed to be ubiquinone. The sequence is that of NADH-ubiquinone oxidoreductase chain 3 (MT-ND3) from Struthio camelus (Common ostrich).